We begin with the raw amino-acid sequence, 549 residues long: Undecaprenyl phosphate-alpha-4-amino-4-deoxy-L-arabinose arabinosyl transferase (549 aa).

Transmembrane regions (helical) follow at residues 9–29, 80–100, 112–132, 136–156, 176–196, 204–224, 256–276, 288–308, 312–332, 346–366, 376–396, and 402–422; these read LLLI…GLWI, LFGV…LAYL, SLAC…SGYA, PQFT…LDAG, FLTK…PYML, LLGY…PWAL, PWWF…GLLP, QPPV…FSLS, LPTY…HALV, NGLL…YLQL, FELF…LAQW, and AWAA…AAMP.

The protein belongs to the glycosyltransferase 83 family.

Its subcellular location is the cell inner membrane. The catalysed reaction is 4-amino-4-deoxy-alpha-L-arabinopyranosyl di-trans,octa-cis-undecaprenyl phosphate + lipid IVA = lipid IIA + di-trans,octa-cis-undecaprenyl phosphate.. The protein operates within lipopolysaccharide metabolism; 4-amino-4-deoxy-beta-L-arabinose-lipid A biosynthesis. In terms of biological role, catalyzes the transfer of the L-Ara4N moiety of the glycolipid undecaprenyl phosphate-alpha-L-Ara4N to lipid A. The modified arabinose is attached to lipid A and is required for resistance to polymyxin and cationic antimicrobial peptides. The protein is Undecaprenyl phosphate-alpha-4-amino-4-deoxy-L-arabinose arabinosyl transferase of Pseudomonas paraeruginosa (strain DSM 24068 / PA7) (Pseudomonas aeruginosa (strain PA7)).